The sequence spans 173 residues: Large ribosomal subunit protein uL10 (173 aa).

This sequence belongs to the universal ribosomal protein uL10 family. Part of the ribosomal stalk of the 50S ribosomal subunit. The N-terminus interacts with L11 and the large rRNA to form the base of the stalk. The C-terminus forms an elongated spine to which L12 dimers bind in a sequential fashion forming a multimeric L10(L12)X complex.

Its function is as follows. Forms part of the ribosomal stalk, playing a central role in the interaction of the ribosome with GTP-bound translation factors. In Chlorobaculum tepidum (strain ATCC 49652 / DSM 12025 / NBRC 103806 / TLS) (Chlorobium tepidum), this protein is Large ribosomal subunit protein uL10.